A 303-amino-acid chain; its full sequence is Probable 5-dehydro-4-deoxyglucarate dehydratase (303 aa).

Belongs to the DapA family.

The catalysed reaction is 5-dehydro-4-deoxy-D-glucarate + H(+) = 2,5-dioxopentanoate + CO2 + H2O. Its pathway is carbohydrate acid metabolism; D-glucarate degradation; 2,5-dioxopentanoate from D-glucarate: step 2/2. The polypeptide is Probable 5-dehydro-4-deoxyglucarate dehydratase (Pseudomonas fluorescens (strain Pf0-1)).